The primary structure comprises 550 residues: Epidermal growth factor-like protein 6 (550 aa).

The signal sequence occupies residues 1-18 (MQPPWGLALPLLLPWVTG). The region spanning 55–90 (NKGVCEAMCEPRCKFGECVGPNKCRCFPGYTGKTCT) is the EGF-like 1 domain. Disulfide bonds link Cys59-Cys72, Cys63-Cys78, Cys80-Cys89, Cys96-Cys107, Cys103-Cys116, and Cys118-Cys130. The EGF-like 2; calcium-binding domain maps to 92–131 (DVNECGVKPRPCQHRCVNTHGSYKCFCLSGHMLLPDATCS). In terms of domain architecture, EGF-like 3 spans 135 to 171 (TCARLNCQYGCEDTEEGPRCVCPSSGLRLGPNGRVCL). Residues 172 to 210 (DIDECASSKAVCPSNRRCVNTFGSYYCKCHIGFELKYIG) enclose the EGF-like 4; calcium-binding domain. 5 disulfides stabilise this stretch: Cys176/Cys189, Cys183/Cys198, Cys221/Cys234, Cys228/Cys243, and Cys245/Cys256. Positions 217-257 (DINECALNTHPCSPHANCLNTRGSFKCKCKQGYRGNGLQCS) constitute an EGF-like 5; calcium-binding domain. Residues 295–354 (KMVTPRPASTRVPKVNLPYSSEEGVSRGRNYDGEQKKKEEGKRERLEEEKGEKTLRNEVE) form a disordered region. Positions 318 to 354 (GVSRGRNYDGEQKKKEEGKRERLEEEKGEKTLRNEVE) are enriched in basic and acidic residues. Residues 327–357 (GEQKKKEEGKRERLEEEKGEKTLRNEVEQER) adopt a coiled-coil conformation. Asn394 carries N-linked (GlcNAc...) asparagine glycosylation. One can recognise an MAM domain in the interval 397-543 (VDCSFDLGVC…VLLVSGLCPD (147 aa)).

This sequence belongs to the nephronectin family. In terms of tissue distribution, expressed at basement membrane of pelage follicles (at protein level).

The protein resides in the secreted. It is found in the extracellular space. It localises to the extracellular matrix. The protein localises to the basement membrane. May bind integrin alpha-8/beta-1 and play a role in hair follicle morphogenesis. Promotes matrix assembly. This chain is Epidermal growth factor-like protein 6 (Egfl6), found in Mus musculus (Mouse).